A 151-amino-acid polypeptide reads, in one-letter code: Large ribosomal subunit protein uL13 (151 aa).

Positions 129 to 151 are disordered; the sequence is PTHPHDAQKPKELNINTIPGAES. Positions 131 to 140 are enriched in basic and acidic residues; that stretch reads HPHDAQKPKE.

The protein belongs to the universal ribosomal protein uL13 family. Part of the 50S ribosomal subunit.

This protein is one of the early assembly proteins of the 50S ribosomal subunit, although it is not seen to bind rRNA by itself. It is important during the early stages of 50S assembly. In Trichormus variabilis (strain ATCC 29413 / PCC 7937) (Anabaena variabilis), this protein is Large ribosomal subunit protein uL13.